Reading from the N-terminus, the 115-residue chain is Con-Ins G1a (115 aa).

The N-terminal stretch at M1–G24 is a signal peptide. A propeptide spanning residues N25–R29 is cleaved from the precursor. At P34 the chain carries 4-hydroxyproline; partial. 3 disulfide bridges follow: C38–C101, C50–C114, and C100–C105. E41 is subject to 4-carboxyglutamate. Positions K53–R94 are cleaved as a propeptide — c peptide. E98 carries the post-translational modification 4-carboxyglutamate. The residue at position 104 (P104) is a 4-hydroxyproline; partial. Position 109 is a 4-carboxyglutamate; partial (E109). At C114 the chain carries Cysteine amide.

The protein belongs to the insulin family. As to quaternary structure, heterodimer of A and B chains; disulfide-linked. Expressed by the venom gland.

It is found in the secreted. Its function is as follows. This venom insulin, from a fish-hunting cone snail, facilitates prey capture by rapidly inducing hypoglycemic shock. It is one of the smallest known insulin found in nature and lacks the C-terminal segment of the B chain that, in human insulin, mediates engagement of the insulin receptor (INSR) and assembly of the hormone's hexameric storage form. Despite lacking this segment, it both binds and activates human insulin receptor (long isoform (HIR-B)) with a high potency (EC(50)=16.28 nM). In vivo, intraperitoneal injection of this peptide into zebrafish lowers blood glucose with the same potency than human insulin. In addition, when applied to water, this peptide reduces overall locomotor activity of zebrafish larvae, observed as a significant decrease in the percentage of time spent swimming and movement frequency. When tested on a mouse model of diabetes, this insulin also lowers blood glucose with a 10-fold lower potency than human insulin. This Conus geographus (Geography cone) protein is Con-Ins G1a.